We begin with the raw amino-acid sequence, 181 residues long: ATP-dependent protease subunit HslV (181 aa).

Thr-7 is a catalytic residue. Residues Ala-166, Cys-169, and Thr-172 each coordinate Na(+).

The protein belongs to the peptidase T1B family. HslV subfamily. In terms of assembly, a double ring-shaped homohexamer of HslV is capped on each side by a ring-shaped HslU homohexamer. The assembly of the HslU/HslV complex is dependent on binding of ATP.

It is found in the cytoplasm. The enzyme catalyses ATP-dependent cleavage of peptide bonds with broad specificity.. With respect to regulation, allosterically activated by HslU binding. Protease subunit of a proteasome-like degradation complex believed to be a general protein degrading machinery. The polypeptide is ATP-dependent protease subunit HslV (Anaeromyxobacter dehalogenans (strain 2CP-1 / ATCC BAA-258)).